The following is a 343-amino-acid chain: Anthranilate phosphoribosyltransferase (343 aa).

5-phospho-alpha-D-ribose 1-diphosphate is bound by residues G84, 87-88, T92, 94-97, 112-120, and S124; these read GD, NIST, and KHGNRGVSS. Anthranilate is bound at residue G84. S96 is a binding site for Mg(2+). An anthranilate-binding site is contributed by N115. Anthranilate is bound at residue R170. Residues D229 and E230 each contribute to the Mg(2+) site.

The protein belongs to the anthranilate phosphoribosyltransferase family. As to quaternary structure, homodimer. Mg(2+) is required as a cofactor.

It carries out the reaction N-(5-phospho-beta-D-ribosyl)anthranilate + diphosphate = 5-phospho-alpha-D-ribose 1-diphosphate + anthranilate. The protein operates within amino-acid biosynthesis; L-tryptophan biosynthesis; L-tryptophan from chorismate: step 2/5. Its function is as follows. Catalyzes the transfer of the phosphoribosyl group of 5-phosphorylribose-1-pyrophosphate (PRPP) to anthranilate to yield N-(5'-phosphoribosyl)-anthranilate (PRA). The sequence is that of Anthranilate phosphoribosyltransferase from Burkholderia pseudomallei (strain 1106a).